The primary structure comprises 342 residues: Acetoin:2,6-dichlorophenolindophenol oxidoreductase subunit beta (342 aa).

As to quaternary structure, tetramer of 2 alpha and 2 beta subunits.

It functions in the pathway ketone degradation; acetoin degradation. Its function is as follows. Catalyzes the 2,6-dichlorophenolindophenol-dependent cleavage of acetoin into acetate and acetaldehyde. The chain is Acetoin:2,6-dichlorophenolindophenol oxidoreductase subunit beta (acoB) from Bacillus subtilis (strain 168).